The primary structure comprises 828 residues: Periplasmic nitrate reductase (828 aa).

A signal peptide (tat-type signal) is located at residues 1–31 (MKLSRRSFMKANAVAAAAAAAGLSVPGVARA). The region spanning 39-95 (IKWDKAPCRFCGTGCGVLVGTQQGRVVACQGDPDAPVNRGLNCIKGYFLPKIMYGKD) is the 4Fe-4S Mo/W bis-MGD-type domain. [4Fe-4S] cluster-binding residues include cysteine 46, cysteine 49, cysteine 53, and cysteine 81. Residues lysine 83, glutamine 150, asparagine 175, cysteine 179, 212 to 219 (WGSNMAEM), 243 to 247 (STYQH), 262 to 264 (QSD), methionine 372, glutamine 376, asparagine 482, 508 to 509 (SD), lysine 531, aspartate 558, and 718 to 727 (TGRVLEHWHT) each bind Mo-bis(molybdopterin guanine dinucleotide). Phenylalanine 794 contributes to the substrate binding site. Residues asparagine 802 and lysine 819 each coordinate Mo-bis(molybdopterin guanine dinucleotide).

This sequence belongs to the prokaryotic molybdopterin-containing oxidoreductase family. NasA/NapA/NarB subfamily. Component of the periplasmic nitrate reductase NapAB complex composed of NapA and NapB. It depends on [4Fe-4S] cluster as a cofactor. The cofactor is Mo-bis(molybdopterin guanine dinucleotide). Predicted to be exported by the Tat system. The position of the signal peptide cleavage has not been experimentally proven.

It is found in the periplasm. It catalyses the reaction 2 Fe(II)-[cytochrome] + nitrate + 2 H(+) = 2 Fe(III)-[cytochrome] + nitrite + H2O. Its function is as follows. Catalytic subunit of the periplasmic nitrate reductase complex NapAB. Receives electrons from NapB and catalyzes the reduction of nitrate to nitrite. The polypeptide is Periplasmic nitrate reductase (Escherichia coli O127:H6 (strain E2348/69 / EPEC)).